A 606-amino-acid polypeptide reads, in one-letter code: Probable potassium transport system protein Kup 2 (606 aa).

A run of 12 helical transmembrane segments spans residues 18-38 (GLVF…IMTL), 46-66 (VLGI…VEYA), 97-117 (VAFV…DGII), 140-160 (AQGV…IFQF), 169-189 (AFGP…IVSI), 204-224 (AVTF…EVIL), 247-267 (AWYF…AFIL), 286-306 (ILYI…SQAL), 339-359 (IYIG…MLIF), 368-388 (AYGL…TMIF), 395-415 (WKVP…TANF), and 418-438 (LPHG…IMII).

Belongs to the HAK/KUP transporter (TC 2.A.72) family.

It localises to the cell inner membrane. It catalyses the reaction K(+)(in) + H(+)(in) = K(+)(out) + H(+)(out). Functionally, transport of potassium into the cell. Likely operates as a K(+):H(+) symporter. The polypeptide is Probable potassium transport system protein Kup 2 (Geobacter metallireducens (strain ATCC 53774 / DSM 7210 / GS-15)).